The primary structure comprises 82 residues: ATP synthase subunit c (82 aa).

Transmembrane regions (helical) follow at residues 7–27 and 57–77; these read AASVLAAALAVGLAAIGPGIG and LAFMEALTIYGLVVALVLLFA.

It belongs to the ATPase C chain family. In terms of assembly, F-type ATPases have 2 components, F(1) - the catalytic core - and F(0) - the membrane proton channel. F(1) has five subunits: alpha(3), beta(3), gamma(1), delta(1), epsilon(1). F(0) has four main subunits: a(1), b(1), b'(1) and c(10-14). The alpha and beta chains form an alternating ring which encloses part of the gamma chain. F(1) is attached to F(0) by a central stalk formed by the gamma and epsilon chains, while a peripheral stalk is formed by the delta, b and b' chains.

The protein localises to the cellular thylakoid membrane. In terms of biological role, f(1)F(0) ATP synthase produces ATP from ADP in the presence of a proton or sodium gradient. F-type ATPases consist of two structural domains, F(1) containing the extramembraneous catalytic core and F(0) containing the membrane proton channel, linked together by a central stalk and a peripheral stalk. During catalysis, ATP synthesis in the catalytic domain of F(1) is coupled via a rotary mechanism of the central stalk subunits to proton translocation. Its function is as follows. Key component of the F(0) channel; it plays a direct role in translocation across the membrane. A homomeric c-ring of between 10-14 subunits forms the central stalk rotor element with the F(1) delta and epsilon subunits. In Synechococcus sp. (strain WH7803), this protein is ATP synthase subunit c.